A 98-amino-acid chain; its full sequence is NADH-ubiquinone oxidoreductase chain 4L (98 aa).

3 helical membrane passes run 1-21 (MSMV…GLLM), 29-49 (SLLC…MTIL), and 61-81 (IILL…LVMV).

Belongs to the complex I subunit 4L family. Core subunit of respiratory chain NADH dehydrogenase (Complex I) which is composed of 45 different subunits.

It is found in the mitochondrion inner membrane. The catalysed reaction is a ubiquinone + NADH + 5 H(+)(in) = a ubiquinol + NAD(+) + 4 H(+)(out). Functionally, core subunit of the mitochondrial membrane respiratory chain NADH dehydrogenase (Complex I) which catalyzes electron transfer from NADH through the respiratory chain, using ubiquinone as an electron acceptor. Part of the enzyme membrane arm which is embedded in the lipid bilayer and involved in proton translocation. This is NADH-ubiquinone oxidoreductase chain 4L (MT-ND4L) from Arctocephalus australis (South American fur seal).